A 113-amino-acid chain; its full sequence is Hydrogenase maturation factor HypA (113 aa).

His-2 contributes to the Ni(2+) binding site. Positions 73, 76, 89, and 92 each coordinate Zn(2+).

The protein belongs to the HypA/HybF family.

In terms of biological role, involved in the maturation of [NiFe] hydrogenases. Required for nickel insertion into the metal center of the hydrogenase. The chain is Hydrogenase maturation factor HypA from Rhodopseudomonas palustris (strain TIE-1).